Reading from the N-terminus, the 167-residue chain is NADH-ubiquinone oxidoreductase chain 6 (167 aa).

Transmembrane regions (helical) follow at residues 1–21 (MVLM…VASN), 23–43 (SPYF…GMLM), 47–67 (MTFL…VVFA), 86–106 (VFSY…AFVG), and 133–153 (AGGY…LVVL).

Belongs to the complex I subunit 6 family.

Its subcellular location is the mitochondrion membrane. It carries out the reaction a ubiquinone + NADH + 5 H(+)(in) = a ubiquinol + NAD(+) + 4 H(+)(out). In terms of biological role, core subunit of the mitochondrial membrane respiratory chain NADH dehydrogenase (Complex I) that is believed to belong to the minimal assembly required for catalysis. Complex I functions in the transfer of electrons from NADH to the respiratory chain. The immediate electron acceptor for the enzyme is believed to be ubiquinone. The sequence is that of NADH-ubiquinone oxidoreductase chain 6 (MT-ND6) from Polypterus ornatipinnis (Ornate bichir).